The chain runs to 510 residues: Zinc finger protein 692 (510 aa).

Disordered stretches follow at residues 1–20 and 121–306; these read MAASPADASRRRREKRRQLD and WGPS…EDTA. A Phosphoserine modification is found at S161. Over residues 163-172 the composition is skewed to basic and acidic residues; it reads CDERAQEARM. Residues 188-201 show a composition bias toward acidic residues; the sequence is EDGEEEEEDEEEML. Position 225 is a phosphoserine (S225). The span at 237–265 shows a compositional bias: low complexity; sequence APAPAAVPAPLASPSSSASSLGSGAPGPV. Positions 278–297 are enriched in polar residues; sequence QADQQTEPLASPGSQAQSAL. 5 C2H2-type zinc fingers span residues 322–347, 353–377, 383–405, 411–433, and 442–465; these read LPCDFPGCGRIFSNRQYLNHHKKYQH, FSCPEPACGKSFNFKKHLKEHVKLH, YICEFCARSFRTSSNLVIHRRIH, LQCEICGFTCRQKASLNWHRRKH, and FPCEFCGKRFEKPDSVAAHRSKSH. S464 carries the phosphoserine modification.

It belongs to the krueppel C2H2-type zinc-finger protein family. Post-translationally, phosphorylation at Ser-464 results in loss of DNA-binding activity.

The protein localises to the nucleus. Its function is as follows. May act as an transcriptional repressor for PCK1 gene expression, in turn may participate in the hepatic gluconeogenesis regulation through the activated AMPK signaling pathway. This chain is Zinc finger protein 692, found in Bos taurus (Bovine).